The following is a 318-amino-acid chain: Thymidylate synthase (318 aa).

DUMP-binding positions include R25 and 180–181 (RR). C200 functions as the Nucleophile in the catalytic mechanism. DUMP is bound by residues 220–223 (RSGD), N231, and 261–263 (HIY). (6R)-5,10-methylene-5,6,7,8-tetrahydrofolate is bound at residue D223. Residue A317 participates in (6R)-5,10-methylene-5,6,7,8-tetrahydrofolate binding.

This sequence belongs to the thymidylate synthase family. Bacterial-type ThyA subfamily. In terms of assembly, homodimer.

Its subcellular location is the cytoplasm. The enzyme catalyses dUMP + (6R)-5,10-methylene-5,6,7,8-tetrahydrofolate = 7,8-dihydrofolate + dTMP. Its pathway is pyrimidine metabolism; dTTP biosynthesis. Functionally, catalyzes the reductive methylation of 2'-deoxyuridine-5'-monophosphate (dUMP) to 2'-deoxythymidine-5'-monophosphate (dTMP) while utilizing 5,10-methylenetetrahydrofolate (mTHF) as the methyl donor and reductant in the reaction, yielding dihydrofolate (DHF) as a by-product. This enzymatic reaction provides an intracellular de novo source of dTMP, an essential precursor for DNA biosynthesis. This is Thymidylate synthase from Lactobacillus johnsonii (strain CNCM I-12250 / La1 / NCC 533).